The primary structure comprises 576 residues: 5'-nucleotidase (576 aa).

Positions 1-28 (MRPAAAKVPKWLLLALSALLPQWPAASA) are cleaved as a signal peptide. Residues Asp-38 and His-40 each coordinate Zn(2+). Cys-53 and Cys-59 are joined by a disulfide. N-linked (GlcNAc...) asparagine glycosylation occurs at Asn-55. 4 residues coordinate Zn(2+): Asp-87, Asn-119, His-222, and His-245. N-linked (GlcNAc...) asparagine glycans are attached at residues Asn-313 and Asn-335. 2 disulfides stabilise this stretch: Cys-355–Cys-360 and Cys-367–Cys-389. Arg-356 lines the AMP pocket. Arg-356 lines the IMP pocket. Residues Asn-392 and Arg-397 each contribute to the AMP site. Residues Asn-392 and Arg-397 each coordinate IMP. N-linked (GlcNAc...) asparagine glycosylation occurs at Asn-405. Phe-419 is a binding site for AMP. Residue Phe-419 coordinates IMP. Cys-478 and Cys-481 are disulfide-bonded. Tyr-502 and Asp-508 together coordinate AMP. The IMP site is built by Tyr-502 and Asp-508. A lipid anchor (GPI-anchor amidated serine) is attached at Ser-551. The propeptide at 552-576 (AASHYQGSFPLVILSFWAMILILYQ) is removed in mature form.

It belongs to the 5'-nucleotidase family. As to quaternary structure, homodimer. Zn(2+) serves as cofactor. Expressed at high levels in the placenta, kidney, lung and stomach and at lower levels in the thymus, spleen, skeletal muscle and esophagus.

It is found in the cell membrane. The catalysed reaction is a ribonucleoside 5'-phosphate + H2O = a ribonucleoside + phosphate. It carries out the reaction a 2'-deoxyribonucleoside 5'-phosphate + H2O = a 2'-deoxyribonucleoside + phosphate. It catalyses the reaction dTMP + H2O = thymidine + phosphate. The enzyme catalyses CMP + H2O = cytidine + phosphate. The catalysed reaction is IMP + H2O = inosine + phosphate. It carries out the reaction AMP + H2O = adenosine + phosphate. It catalyses the reaction GMP + H2O = guanosine + phosphate. The enzyme catalyses UMP + H2O = uridine + phosphate. The catalysed reaction is dAMP + H2O = 2'-deoxyadenosine + phosphate. It carries out the reaction dCMP + H2O = 2'-deoxycytidine + phosphate. In terms of biological role, catalyzes the hydrolysis of nucleotide monophosphates, releasing inorganic phosphate and the corresponding nucleoside. Hydrolyzes IMP. Shows a preference for ribonucleotide monophosphates over their equivalent deoxyribose forms. Although AMP is the preferred substrate can also hydrolyze UMP, GMP, CMP, dAMP, dCMP, dTMP, NAD and NMN. This chain is 5'-nucleotidase (Nt5e), found in Mus musculus (Mouse).